Consider the following 85-residue polypeptide: Beta-defensin 18 (85 aa).

A signal peptide spans 1–23; sequence MQSTMKMFGIILMVIFSVSCGPS. Disulfide bonds link cysteine 39–cysteine 65, cysteine 46–cysteine 60, and cysteine 50–cysteine 66.

This sequence belongs to the beta-defensin family.

It is found in the secreted. Has antibacterial activity. This is Beta-defensin 18 (Defb18) from Mus musculus (Mouse).